The sequence spans 477 residues: Trigger factor (477 aa).

Residues 174–261 enclose the PPIase FKBP-type domain; that stretch reads GDIAVVSFKG…LKDLKEKELP (88 aa). Residues 435 to 477 are disordered; sequence VNEKTTKTSKATKTSKTTKATKTATKTTKTTKTTKTQNKKEKK. Residues 442–470 are compositionally biased toward low complexity; that stretch reads TSKATKTSKTTKATKTATKTTKTTKTTKT.

Belongs to the FKBP-type PPIase family. Tig subfamily.

The protein resides in the cytoplasm. It carries out the reaction [protein]-peptidylproline (omega=180) = [protein]-peptidylproline (omega=0). Functionally, involved in protein export. Acts as a chaperone by maintaining the newly synthesized protein in an open conformation. Functions as a peptidyl-prolyl cis-trans isomerase. The chain is Trigger factor from Prochlorococcus marinus (strain MIT 9301).